The following is a 224-amino-acid chain: ATP phosphoribosyltransferase (224 aa).

Belongs to the ATP phosphoribosyltransferase family. Short subfamily. Heteromultimer composed of HisG and HisZ subunits.

It localises to the cytoplasm. The catalysed reaction is 1-(5-phospho-beta-D-ribosyl)-ATP + diphosphate = 5-phospho-alpha-D-ribose 1-diphosphate + ATP. Its pathway is amino-acid biosynthesis; L-histidine biosynthesis; L-histidine from 5-phospho-alpha-D-ribose 1-diphosphate: step 1/9. Functionally, catalyzes the condensation of ATP and 5-phosphoribose 1-diphosphate to form N'-(5'-phosphoribosyl)-ATP (PR-ATP). Has a crucial role in the pathway because the rate of histidine biosynthesis seems to be controlled primarily by regulation of HisG enzymatic activity. In Cupriavidus taiwanensis (strain DSM 17343 / BCRC 17206 / CCUG 44338 / CIP 107171 / LMG 19424 / R1) (Ralstonia taiwanensis (strain LMG 19424)), this protein is ATP phosphoribosyltransferase.